Reading from the N-terminus, the 216-residue chain is Small ribosomal subunit protein uS3 (216 aa).

Residues leucine 38–arginine 106 form the KH type-2 domain.

This sequence belongs to the universal ribosomal protein uS3 family. Part of the 30S ribosomal subunit. Forms a tight complex with proteins S10 and S14.

Functionally, binds the lower part of the 30S subunit head. Binds mRNA in the 70S ribosome, positioning it for translation. The chain is Small ribosomal subunit protein uS3 from Thermodesulfovibrio yellowstonii (strain ATCC 51303 / DSM 11347 / YP87).